The primary structure comprises 686 residues: XK-related protein 5 (686 aa).

Helical transmembrane passes span leucine 33 to serine 53, histidine 205 to alanine 225, leucine 239 to proline 259, valine 265 to phenylalanine 285, and isoleucine 297 to leucine 317. Disordered regions lie at residues glycine 339–alanine 387, alanine 448–serine 468, and phenylalanine 490–proline 592. Residues aspartate 340–glutamate 359 are compositionally biased toward basic and acidic residues. Polar residues-rich tracts occupy residues serine 450–serine 468 and phenylalanine 490–glutamate 509. A compositionally biased stretch (gly residues) spans glutamine 523 to glycine 536. Residues valine 550–histidine 567 show a composition bias toward polar residues.

This sequence belongs to the XK family.

It localises to the cell membrane. In Homo sapiens (Human), this protein is XK-related protein 5.